The following is a 376-amino-acid chain: NIF3-like protein 1 (376 aa).

N6-acetyllysine is present on lysine 108. The mediates interaction with COPS2 stretch occupies residues 243–376; the sequence is LLLHTGMGRL…ETDRDPLRVV (134 aa). Residue threonine 254 is modified to Phosphothreonine. Position 258 is a phosphoserine (serine 258).

The protein belongs to the GTP cyclohydrolase I type 2/NIF3 family. As to quaternary structure, homodimer. Interacts with COPS2. Interacts with THOC7.

Its subcellular location is the cytoplasm. It localises to the nucleus. Functionally, may function as a transcriptional corepressor through its interaction with COPS2, negatively regulating the expression of genes involved in neuronal differentiation. This Rattus norvegicus (Rat) protein is NIF3-like protein 1.